The following is a 1022-amino-acid chain: Polyamine-modulated factor 1-binding protein 1 (1022 aa).

Coiled-coil stretches lie at residues 89-121, 169-281, 312-377, 411-732, and 758-968; these read NKQYHLRQLQQLKKKLLTLQQELEFRTQELQAS, EKLH…ACSN, SEDC…LREE, LKKD…SAIQ, and QDDL…KAGN. 2 stretches are compositionally biased toward basic and acidic residues: residues 545-556 and 571-582; these read QKESSKIEEERK and EGQRRLSNAEKE. The interval 545–582 is disordered; sequence QKESSKIEEERKHNRQRLQELSSELSEGQRRLSNAEKE.

In terms of tissue distribution, expressed in the testis.

The protein localises to the cell projection. It localises to the cilium. It is found in the flagellum. Required for normal spermatogenesis. It functions as a scaffold protein that attaches the sperm head-tail connecting piece to the nuclear envelope, thus maintaining sperm head and tail integrity. May also be involved in the general organization of cellular cytoskeleton. The polypeptide is Polyamine-modulated factor 1-binding protein 1 (Pmfbp1) (Mus musculus (Mouse)).